The following is a 711-amino-acid chain: C6 finger domain transcription factor nscR (711 aa).

Positions 17–43 (CELCRERKVKCDKLDPCTNCSSAGVIC) form a DNA-binding region, zn(2)-C6 fungal-type. The interval 372–394 (SPPKHINDSDFDPTTSHDVPDRE) is disordered.

It localises to the nucleus. Its function is as follows. Transcription factor that specifically regulates the neosartoricin B biosynthesis gene cluster. This Trichophyton tonsurans (strain CBS 112818) (Scalp ringworm fungus) protein is C6 finger domain transcription factor nscR.